The chain runs to 236 residues: Small ribosomal subunit protein uS2c (236 aa).

This sequence belongs to the universal ribosomal protein uS2 family.

It is found in the plastid. Its subcellular location is the chloroplast. The protein is Small ribosomal subunit protein uS2c (rps2) of Nandina domestica (Heavenly bamboo).